Reading from the N-terminus, the 184-residue chain is Elongation factor P (184 aa).

It belongs to the elongation factor P family.

It localises to the cytoplasm. It functions in the pathway protein biosynthesis; polypeptide chain elongation. Functionally, involved in peptide bond synthesis. Stimulates efficient translation and peptide-bond synthesis on native or reconstituted 70S ribosomes in vitro. Probably functions indirectly by altering the affinity of the ribosome for aminoacyl-tRNA, thus increasing their reactivity as acceptors for peptidyl transferase. The polypeptide is Elongation factor P (Mycoplasma mycoides subsp. mycoides SC (strain CCUG 32753 / NCTC 10114 / PG1)).